The primary structure comprises 814 residues: Spore development regulator umv1 (814 aa).

Disordered regions lie at residues 1 to 36 (MSRP…GSTE), 96 to 134 (HDRP…VRRG), 267 to 333 (QGLK…MPRS), 407 to 441 (PPRD…RAGP), 457 to 501 (PVRS…ASLT), and 539 to 814 (QSSG…NQPY). The segment covering 7–18 (RSGNASTPQGTS) has biased composition (polar residues). The Velvet domain occupies 53 to 274 (RDHIEYQLTV…AEQGLKVRVR (222 aa)). A compositionally biased stretch (basic residues) spans 271 to 285 (VRVRKHPRSRRRGSK). The segment covering 407–423 (PPRDFADGRYMDGDYPP) has biased composition (basic and acidic residues). Residues 438–445 (RAGPSEYS) carry the Nuclear localization signal motif. The span at 620 to 631 (AAARRSPIPSAR) shows a compositional bias: low complexity. 2 stretches are compositionally biased toward basic and acidic residues: residues 723–741 (TRDR…DRDQ) and 760–796 (GELD…RRDF). A compositionally biased stretch (polar residues) spans 800–814 (TMPSKPSSRGHNQPY).

The protein belongs to the velvet family. VosA subfamily. In terms of assembly, forms a heterodimeric complex with velB; the formation of the VEL2-VOS1 complex is light-dependent.

Its subcellular location is the nucleus. In terms of biological role, component of the velB-VosA heterodimeric complex that plays a dual role in activating genes associated with spore maturation and repressing certain development-associated genes. The complex binds DNA through the DNA-binding domain of vosA that recognizes an 11-nucleotide consensus sequence 5'-CTGGCCGCGGC-3' consisting of two motifs in the promoters of key developmental regulatory genes. Required for gall induction and teliospore formation on seedlings. The sequence is that of Spore development regulator umv1 from Mycosarcoma maydis (Corn smut fungus).